A 198-amino-acid polypeptide reads, in one-letter code: Guanylate kinase (198 aa).

Gly-2 is subject to N-acetylglycine. The region spanning Pro-4–Ser-186 is the Guanylate kinase-like domain. Residue Gly-14–Thr-19 participates in ATP binding. Substrate is bound at residue Ser-37–Lys-51. Catalysis depends on residues Arg-44, Arg-137, and Arg-148. Asn-171–Asp-172 is a binding site for ATP.

The protein belongs to the guanylate kinase family. Monomer. Interacts with RD3.

The protein resides in the photoreceptor inner segment. It localises to the cytoplasm. Its subcellular location is the cytosol. It carries out the reaction GMP + ATP = GDP + ADP. With respect to regulation, up-regulated by RD3. Functionally, catalyzes the phosphorylation of GMP to GDP. Essential enzyme for recycling GMP and indirectly, cyclic GMP (cGMP). Involved in the cGMP metabolism in photoreceptors. The polypeptide is Guanylate kinase (GUK1) (Sus scrofa (Pig)).